We begin with the raw amino-acid sequence, 457 residues long: Hydrogenobyrinate a,c-diamide synthase (457 aa).

A GATase cobBQ-type domain is found at 255–441 (TVAIAAGRAF…LHTHPAATPG (187 aa)). The Nucleophile role is filled by Cys337.

This sequence belongs to the CobB/CbiA family. The cofactor is Mg(2+).

The enzyme catalyses hydrogenobyrinate + 2 L-glutamine + 2 ATP + 2 H2O = hydrogenobyrinate a,c-diamide + 2 L-glutamate + 2 ADP + 2 phosphate + 2 H(+). It participates in cofactor biosynthesis; adenosylcobalamin biosynthesis; cob(II)yrinate a,c-diamide from precorrin-2 (aerobic route): step 9/10. Catalyzes the ATP-dependent amidation of the two carboxylate groups at positions a and c of hydrogenobyrinate, using either L-glutamine or ammonia as the nitrogen source. The polypeptide is Hydrogenobyrinate a,c-diamide synthase (Mycobacterium bovis (strain ATCC BAA-935 / AF2122/97)).